The primary structure comprises 295 residues: NAD kinase (295 aa).

The Proton acceptor role is filled by Asp74. Residues 74–75 (DG), 148–149 (NE), Arg176, Asp178, and 189–194 (TAYAMS) each bind NAD(+).

This sequence belongs to the NAD kinase family. Requires a divalent metal cation as cofactor.

It localises to the cytoplasm. The enzyme catalyses NAD(+) + ATP = ADP + NADP(+) + H(+). Its function is as follows. Involved in the regulation of the intracellular balance of NAD and NADP, and is a key enzyme in the biosynthesis of NADP. Catalyzes specifically the phosphorylation on 2'-hydroxyl of the adenosine moiety of NAD to yield NADP. This chain is NAD kinase, found in Acidithiobacillus ferrooxidans (strain ATCC 23270 / DSM 14882 / CIP 104768 / NCIMB 8455) (Ferrobacillus ferrooxidans (strain ATCC 23270)).